The primary structure comprises 95 residues: Small ribosomal subunit protein bS20c (95 aa).

Belongs to the bacterial ribosomal protein bS20 family.

The protein resides in the plastid. It localises to the cyanelle. Functionally, binds directly to 16S ribosomal RNA. The protein is Small ribosomal subunit protein bS20c (rps20) of Cyanophora paradoxa.